Here is a 288-residue protein sequence, read N- to C-terminus: Bifunctional protein FolD (288 aa).

Residues 166 to 168 (GAS) and Ile232 contribute to the NADP(+) site.

Belongs to the tetrahydrofolate dehydrogenase/cyclohydrolase family. In terms of assembly, homodimer.

It carries out the reaction (6R)-5,10-methylene-5,6,7,8-tetrahydrofolate + NADP(+) = (6R)-5,10-methenyltetrahydrofolate + NADPH. The enzyme catalyses (6R)-5,10-methenyltetrahydrofolate + H2O = (6R)-10-formyltetrahydrofolate + H(+). Its pathway is one-carbon metabolism; tetrahydrofolate interconversion. Catalyzes the oxidation of 5,10-methylenetetrahydrofolate to 5,10-methenyltetrahydrofolate and then the hydrolysis of 5,10-methenyltetrahydrofolate to 10-formyltetrahydrofolate. The polypeptide is Bifunctional protein FolD (Salmonella arizonae (strain ATCC BAA-731 / CDC346-86 / RSK2980)).